Reading from the N-terminus, the 311-residue chain is MALPMMIDCDPGHDDAIAMVLALASPELEVKAVTASAGNQTPEKTLRNVLRMLTLLNRPDIPVAGGAWKPLMRDLIIADNVHGESGLDGPSLPEPTFAPQNCTAVELMARVLRESQEPVTLVATGPQTNVALLLASHPELHAKIARIVIMGGAMGLGNWQPAAEFNIFVDPQAAEMVFQSGIPVVMAGLDVTHKAQILPADIERFRQIGNPVSTIVAELLDFFMAYHKDEKWGFDGAPLHDPCTIAWLLKPEIFTTIERWVGVETEGKYTQGMTVVDYYHLTGNRPNTTLMLDVDREAFVDLLAQRLAFYA.

H240 is a catalytic residue.

This sequence belongs to the IUNH family. RihA subfamily.

In terms of biological role, hydrolyzes cytidine or uridine to ribose and cytosine or uracil, respectively. This is Pyrimidine-specific ribonucleoside hydrolase RihA from Klebsiella pneumoniae (strain 342).